The sequence spans 119 residues: DNA-binding protein inhibitor ID-3 (119 aa).

One can recognise a bHLH domain in the interval 28-80 (RGKGPAAEEPLSLLDDMNHCYSRLRELVPGVPRGTQLSQVEILQRVIDYILDL).

As to quaternary structure, homodimer, and heterodimer with other HLH proteins. Interacts with COPS5 and COPS7A. Interacts with IFI204. Interacts with GATA4 and NKX2-5. Interacts with ANKRD2; both proteins cooperate in myoblast differentiation. Interacts with CLOCK and BMAL1. In terms of tissue distribution, expressed abundantly in lung, kidney and adrenal gland, but not in adult brain.

It localises to the nucleus. In terms of biological role, transcriptional regulator (lacking a basic DNA binding domain) which negatively regulates the basic helix-loop-helix (bHLH) transcription factors by forming heterodimers and inhibiting their DNA binding and transcriptional activity. Implicated in regulating a variety of cellular processes, including cellular growth, senescence, differentiation, apoptosis, angiogenesis, and neoplastic transformation. Involved in myogenesis by inhibiting skeletal muscle and cardiac myocyte differentiation and promoting muscle precursor cells proliferation. Inhibits the binding of E2A-containing protein complexes to muscle creatine kinase E-box enhancer. Regulates the circadian clock by repressing the transcriptional activator activity of the CLOCK-BMAL1 heterodimer. This Homo sapiens (Human) protein is DNA-binding protein inhibitor ID-3 (ID3).